Reading from the N-terminus, the 480-residue chain is ATP synthase subunit beta (480 aa).

Residue 154–161 (GGAGVGKT) coordinates ATP.

This sequence belongs to the ATPase alpha/beta chains family. In terms of assembly, F-type ATPases have 2 components, CF(1) - the catalytic core - and CF(0) - the membrane proton channel. CF(1) has five subunits: alpha(3), beta(3), gamma(1), delta(1), epsilon(1). CF(0) has four main subunits: a(1), b(1), b'(1) and c(9-12).

The protein resides in the cell inner membrane. The enzyme catalyses ATP + H2O + 4 H(+)(in) = ADP + phosphate + 5 H(+)(out). Its function is as follows. Produces ATP from ADP in the presence of a proton gradient across the membrane. The catalytic sites are hosted primarily by the beta subunits. The polypeptide is ATP synthase subunit beta (Bradyrhizobium sp. (strain ORS 278)).